A 190-amino-acid polypeptide reads, in one-letter code: Vascular endothelial growth factor A (190 aa).

An N-terminal signal peptide occupies residues 1–26 (MNFLLSWVHWSLALLLYLHHAKWSQA). Disulfide bonds link C51-C93, C82-C127, and C86-C129. N100 carries N-linked (GlcNAc...) asparagine glycosylation.

The protein belongs to the PDGF/VEGF growth factor family. In terms of assembly, homodimer; disulfide-linked. Also found as heterodimer with PGF. Interacts with NRP1. Interacts with BSG. Interacts with CD82; this interaction inhibits VEGFA-mediated signaling pathway.

It localises to the secreted. Its function is as follows. Growth factor active in angiogenesis, vasculogenesis and endothelial cell growth. Induces endothelial cell proliferation, promotes cell migration, inhibits apoptosis and induces permeabilization of blood vessels. Binds to the FLT1/VEGFR1 and KDR/VEGFR2 receptors, heparan sulfate and heparin. Binding to NRP1 receptor initiates a signaling pathway needed for motor neuron axon guidance and cell body migration, including for the caudal migration of facial motor neurons from rhombomere 4 to rhombomere 6 during embryonic development. Also binds the DEAR/FBXW7-AS1 receptor. The protein is Vascular endothelial growth factor A (VEGFA) of Bos taurus (Bovine).